The following is a 133-amino-acid chain: Small ribosomal subunit protein uS8 (133 aa).

Belongs to the universal ribosomal protein uS8 family. In terms of assembly, part of the 30S ribosomal subunit. Contacts proteins S5 and S12.

Functionally, one of the primary rRNA binding proteins, it binds directly to 16S rRNA central domain where it helps coordinate assembly of the platform of the 30S subunit. The protein is Small ribosomal subunit protein uS8 of Chloroflexus aurantiacus (strain ATCC 29364 / DSM 637 / Y-400-fl).